We begin with the raw amino-acid sequence, 623 residues long: Kelch-like protein diablo (623 aa).

Residues M1–H54 form a disordered region. Position 19 is a phosphothreonine (T19). Positions G20–S32 are enriched in gly residues. The 68-residue stretch at C72–E139 folds into the BTB domain. Residues C174–G276 form the BACK domain. Kelch repeat units follow at residues V323 to D369, L371 to G417, F418 to G464, L466 to N511, I513 to G558, and Q559 to A605.

Its pathway is protein modification; protein ubiquitination. Probable substrate-specific adapter of an E3 ubiquitin-protein ligase complex which mediates the ubiquitination and subsequent proteasomal degradation of target proteins. May have a role in synapse differentiation and growth. This Drosophila erecta (Fruit fly) protein is Kelch-like protein diablo.